Consider the following 236-residue polypeptide: 15,16-dihydrobiliverdin:ferredoxin oxidoreductase (236 aa).

Belongs to the HY2 family.

It carries out the reaction 15,16-dihydrobiliverdin + oxidized 2[4Fe-4S]-[ferredoxin] = biliverdin IXalpha + reduced 2[4Fe-4S]-[ferredoxin] + 2 H(+). Its function is as follows. Catalyzes the two-electron reduction of biliverdin IX-alpha at the C15 methine bridge. The protein is 15,16-dihydrobiliverdin:ferredoxin oxidoreductase of Prochlorococcus marinus (strain MIT 9215).